Reading from the N-terminus, the 1356-residue chain is Spike glycoprotein (1356 aa).

The first 18 residues, 1-18 (MKLFLILLVLPLASCFFT), serve as a signal peptide directing secretion. S1 stretches follow at residues 16–717 (FFTC…FYYV) and 19–717 (CNSN…FYYV). The Virion surface segment spans residues 19–1296 (CNSNANLSML…NRFENYIKWP (1278 aa)). N-linked (GlcNAc) asparagine; by host glycosylation is found at Asn-35, Asn-52, and Asn-98. Cysteines 106 and 126 form a disulfide. The N-linked (GlcNAc) asparagine; by host glycan is linked to Asn-155. A disulfide bridge connects residues Cys-175 and Cys-181. N-linked (GlcNAc) asparagine; by host glycosylation is found at Asn-187 and Asn-193. Cys-207 and Cys-210 are disulfide-bonded. 8 N-linked (GlcNAc) asparagine; by host glycosylation sites follow: Asn-240, Asn-276, Asn-301, Asn-330, Asn-354, Asn-358, Asn-403, and Asn-426. A disulfide bond links Cys-259 and Cys-284. A disulfide bridge connects residues Cys-328 and Cys-351. An intrachain disulfide couples Cys-438 to Cys-447. Residue Asn-486 is glycosylated (N-linked (GlcNAc...) asparagine; by host). A disulfide bridge links Cys-497 with Cys-500. Residue Asn-506 is glycosylated (N-linked (GlcNAc) asparagine; by host). Asn-512 is a glycosylation site (N-linked (GlcNAc...) asparagine; by host). Cystine bridges form between Cys-516-Cys-567 and Cys-550-Cys-577. The segment at 598–728 (VTWSEGNSIT…NGGNNCTTAV (131 aa)) is interaction with host ANPEP. N-linked (GlcNAc) asparagine; by host glycans are attached at residues Asn-626, Asn-645, Asn-666, Asn-699, and Asn-723. Cysteines 627 and 678 form a disulfide. Residues 718-1356 (SNGGNNCTTA…YYEFEKVHVQ (639 aa)) form an S2 region. A disulfide bridge connects residues Cys-724 and Cys-737. N-linked (GlcNAc) asparagine; by host glycans are attached at residues Asn-749, Asn-762, and Asn-768. 3 disulfide bridges follow: Cys-789–Cys-811, Cys-794–Cys-800, and Cys-896–Cys-907. The fusion peptide stretch occupies residues 934–954 (IGGMVLGGLTSAAAIPFSLAL). Residues 948–1067 (IPFSLALQAR…QVDRLITGRL (120 aa)) are heptad repeat 1 (HR1). A coiled-coil region spans residues 1015 to 1059 (QDVVNQQGSALNHLTSQLRHNFQAISNSIQAIYDRLDSIQADQQV). The cysteines at positions 1098 and 1109 are disulfide-linked. N-linked (GlcNAc) asparagine; by host glycosylation is found at Asn-1111, Asn-1196, Asn-1201, Asn-1218, Asn-1242, Asn-1247, and Asn-1277. A heptad repeat 2 (HR2) region spans residues 1212–1308 (PDYVDVNKTL…VWLIISVVFV (97 aa)). The stretch at 1244-1286 (TYLNLSSELKQLEAKTASLFQTTVELQGLIDQINSTYVDLKLL) forms a coiled coil. Residues 1297–1316 (WWVWLIISVVFVVLLSLLVF) form a helical membrane-spanning segment. The Intravirion segment spans residues 1317-1356 (CCLSTGCCGCCNCLTSSMRGCCDCGSTKLPYYEFEKVHVQ). A KxHxx motif is present at residues 1352–1356 (KVHVQ).

Belongs to the alphacoronaviruses spike protein family. In terms of assembly, homotrimer. During virus morphogenesis, found in a complex with M proteins. Interacts with host ACE2. Post-translationally, glycosylated by host with heterogeneous N-linked glycans protruding from the trimer surface. Highly glycosylated by host, occluding many regions across the surface of the protein.

Its subcellular location is the virion membrane. It localises to the host endoplasmic reticulum-Golgi intermediate compartment membrane. S1 region attaches the virion to the cell membrane by interacting with host ACE2, initiating the infection. Binding to the receptor probably induces conformational changes in the S glycoprotein unmasking the fusion peptide and activating membranes fusion. S2 region belongs to the class I viral fusion protein. Under the current model, the protein has at least 3 conformational states: pre-fusion native state, pre-hairpin intermediate state, and post-fusion hairpin state. During viral and target cell membrane fusion, the coiled coil regions (heptad repeats) regions assume a trimer-of-hairpins structure, positioning the fusion peptide in close proximity to the C-terminal region of the ectodomain. The formation of this structure appears to drive apposition and subsequent fusion of viral and target cell membranes. The polypeptide is Spike glycoprotein (Human coronavirus NL63 (HCoV-NL63)).